The chain runs to 519 residues: Aspartokinase (519 aa).

Serine 326 carries the post-translational modification Phosphoserine. A Phosphothreonine modification is found at threonine 328. Residues leucine 436–serine 518 form the ACT domain.

It belongs to the aspartokinase family.

The catalysed reaction is L-aspartate + ATP = 4-phospho-L-aspartate + ADP. The protein operates within amino-acid biosynthesis; L-methionine biosynthesis via de novo pathway; L-homoserine from L-aspartate: step 1/3. It participates in amino-acid biosynthesis; L-threonine biosynthesis; L-threonine from L-aspartate: step 1/5. In terms of biological role, phosphorylates aspartate, the first step in the biosynthesis of amino acids that derive from aspartate (the aspartate family of amino acids), including methioinine and threonine, the latter of which is a precursor to isoleucine. The protein is Aspartokinase of Schizosaccharomyces pombe (strain 972 / ATCC 24843) (Fission yeast).